The sequence spans 368 residues: Anti-sigma-X factor RsiX (368 aa).

Positions 73–87 (QPQQKEASQENAVTK) are enriched in polar residues. A disordered region spans residues 73–101 (QPQQKEASQENAVTKTETEDSPKAASSLD).

The protein localises to the cell membrane. In terms of biological role, the anti-sigma factor for extracytoplasmic function (ECF) sigma factor SigX, inhibits SigX activity and stabilizes it. This Bacillus subtilis (strain 168) protein is Anti-sigma-X factor RsiX (rsiX).